Consider the following 655-residue polypeptide: p-hydroxybenzoic acid efflux pump subunit AaeB (655 aa).

11 helical membrane passes run 13-33, 38-58, 69-89, 93-113, 121-141, 152-172, 370-390, 407-427, 431-451, 459-479, and 482-502; these read FAVK…HFQL, WAVL…GGEP, LRII…IAMI, LLMI…SSLV, WGLA…EPLL, EIVI…PRSI, LFWL…IAVV, FIYG…VIIP, QSML…GIEV, MGAL…TFHF, and FLDS…VILL.

Belongs to the aromatic acid exporter ArAE (TC 2.A.85) family.

It localises to the cell inner membrane. Forms an efflux pump with AaeA. Could function as a metabolic relief valve, allowing to eliminate certain compounds when they accumulate to high levels in the cell. The polypeptide is p-hydroxybenzoic acid efflux pump subunit AaeB (Escherichia coli O7:K1 (strain IAI39 / ExPEC)).